Consider the following 495-residue polypeptide: MADRNLRDLLAPWVPDAPSRALREMTLDSRVAAAGDLFVAVVGHQADGRRYIPQAIAQGVAAIIAEAKDEATDGEIREMHGVPVIYLSQLNERLSALAGRFYHEPSDNLRLVGVTGTNGKTTTTQLLAQWSQLLGEPSAVMGTVGNGLLGKVIPTENTTGSAVDVQHELAGLVDQGATFCAMEVSSHGLVQHRVAALKFAASVFTNLSRDHLDYHGDMEHYEAAKWLLYSAHHCGQAIINADDEVGRRWLAKLPDAVAVSMEDHINPNCHGRWLKATDVNYHDSGATIRFSSSWGDGEIESRLMGAFNVSNLLLALATLLALGYPLADLLKTAARLQPVCGRMEVFTAPGKPTVVVDYAHTPDALEKALQAARLHCAGKLWCVFGCGGDRDKGKRPLMGAIAEEFADVAVVTDDNPRTEEPRAIINDILAGMLDAGYAKVMEGRAEAVTCAVMQAKENDVVLVAGKGHEDYQIVGNQRLDYSDRVTVARLLGVIA.

UDP-N-acetyl-alpha-D-muramoyl-L-alanyl-D-glutamate is bound by residues Leu27, Ser29, and 44-46; that span reads HQA. Residue 116–122 coordinates ATP; the sequence is GTNGKTT. UDP-N-acetyl-alpha-D-muramoyl-L-alanyl-D-glutamate contacts are provided by residues Asn157, 158–159, Ser185, Gln191, and Arg193; that span reads TT. An N6-carboxylysine modification is found at Lys225. Meso-2,6-diaminopimelate-binding positions include Arg390, 414–417, Gly465, and Glu469; that span reads DNPR. Residues 414-417 carry the Meso-diaminopimelate recognition motif motif; sequence DNPR.

This sequence belongs to the MurCDEF family. MurE subfamily. Requires Mg(2+) as cofactor. Carboxylation is probably crucial for Mg(2+) binding and, consequently, for the gamma-phosphate positioning of ATP.

Its subcellular location is the cytoplasm. The enzyme catalyses UDP-N-acetyl-alpha-D-muramoyl-L-alanyl-D-glutamate + meso-2,6-diaminopimelate + ATP = UDP-N-acetyl-alpha-D-muramoyl-L-alanyl-gamma-D-glutamyl-meso-2,6-diaminopimelate + ADP + phosphate + H(+). It participates in cell wall biogenesis; peptidoglycan biosynthesis. Functionally, catalyzes the addition of meso-diaminopimelic acid to the nucleotide precursor UDP-N-acetylmuramoyl-L-alanyl-D-glutamate (UMAG) in the biosynthesis of bacterial cell-wall peptidoglycan. The sequence is that of UDP-N-acetylmuramoyl-L-alanyl-D-glutamate--2,6-diaminopimelate ligase from Escherichia coli O6:H1 (strain CFT073 / ATCC 700928 / UPEC).